Reading from the N-terminus, the 88-residue chain is Molybdopterin synthase sulfur carrier subunit (88 aa).

A 1-thioglycine; alternate modification is found at glycine 88. Residue glycine 88 is modified to Glycyl adenylate; alternate.

Belongs to the MoaD family. MOCS2A subfamily. Heterotetramer; composed of 2 small (MOCS2A) and 2 large (MOCS2B) subunits. In terms of processing, C-terminal thiocarboxylation occurs in 2 steps, it is first acyl-adenylated (-COAMP) via the hesA/moeB/thiF part of MOCS3, then thiocarboxylated (-COSH) via the rhodanese domain of MOCS3.

It is found in the cytoplasm. The protein resides in the cytosol. The protein operates within cofactor biosynthesis; molybdopterin biosynthesis. Acts as a sulfur carrier required for molybdopterin biosynthesis. Component of the molybdopterin synthase complex that catalyzes the conversion of precursor Z into molybdopterin by mediating the incorporation of 2 sulfur atoms into precursor Z to generate a dithiolene group. In the complex, serves as sulfur donor by being thiocarboxylated (-COSH) at its C-terminus by MOCS3. After interaction with MOCS2B, the sulfur is then transferred to precursor Z to form molybdopterin. This chain is Molybdopterin synthase sulfur carrier subunit, found in Mus musculus (Mouse).